The chain runs to 405 residues: MLAIATLHVALQVFGAFSLSHAAAVTLEHRSAGNSNIAAIPAKWDVYGYLFNVTVGSPPQNITMLSDMTWMAPFVRSGRCLSQFNPELCVAQGQSFFNEHDSTTFGNTTFAQATWPVTAFAPNFTVDYGRDKFCIGNICNKDILMQVSDFPYPGSVVPVIPFGGIFGLAPTPKTITETSEPVNFQAWKNGNMGPLVGWHTCEVLKSAASCQGGDAQLVFGGTDTTMYSAKKIQSYEIQNPEWLSDAFYPSTPPRSNYWTVVDEGSEGLGAPLSLNGYKYLVRHIKSAKLASKAIVQNIQQQGSSGYNTANQDWYTVSCDGLDEFPNLVYQLDGRKKYTISPGDYVTKLTDMPGSVCYLNVNVWKYGRTENGDARVVLLGKAFLKRKYLVLNFEERSFGLAPLLTG.

A signal peptide spans 1-24 (MLAIATLHVALQVFGAFSLSHAAA). Positions 49–400 (YLFNVTVGSP…NFEERSFGLA (352 aa)) constitute a Peptidase A1 domain. Residues asparagine 52, asparagine 61, asparagine 107, and asparagine 123 are each glycosylated (N-linked (GlcNAc...) asparagine). A disulfide bridge connects residues cysteine 318 and cysteine 356.

The protein belongs to the peptidase A1 family.

It localises to the secreted. Its function is as follows. Secreted aspartic protease; part of the gene cluster that mediates the biosynthesis of the mycotoxin fusarin C. Within the cluster, FUS1, FUS2, FUS8 and FUS9 are sufficient for fusarin production. The other FUS cluster members are not essential for fusarin C biosynthesis. The protein is Secreted aspartic protease FUS4 of Gibberella fujikuroi (strain CBS 195.34 / IMI 58289 / NRRL A-6831) (Bakanae and foot rot disease fungus).